The primary structure comprises 435 residues: Polyadenylate-binding protein RBP47B (435 aa).

The segment covering 1–15 (MQTTNGSDSTLATSG) has biased composition (polar residues). Disordered regions lie at residues 1 to 41 (MQTT…QQWM) and 85 to 104 (YGSY…RGSG). Residues 29–41 (QWQQQQQQQQQWM) are compositionally biased toward low complexity. RRM domains follow at residues 108–188 (KTLW…WASF), 202–281 (LSVF…IATP), and 321–393 (ATIF…WGRS). The segment at 392-412 (RSPNKQWRGDSGQQWNGGYSR) is disordered.

It belongs to the polyadenylate-binding RBP47 family. In terms of assembly, interacts with the poly(A) tail of mRNA in nucleus. In terms of tissue distribution, expressed at low levels in leaves, stems, flowers, and seedlings.

It localises to the nucleus. Its subcellular location is the cytoplasmic granule. In terms of biological role, heterogeneous nuclear ribonucleoprotein (hnRNP)-protein binding the poly(A) tail of mRNA and probably involved in some steps of pre-mRNA maturation. This is Polyadenylate-binding protein RBP47B (RBP47B) from Arabidopsis thaliana (Mouse-ear cress).